Reading from the N-terminus, the 206-residue chain is MLSNLMSWHITLPIALAAAVIGYLFGSIPFGLILTRAAGLGDVRSIGSGNIGATNVLRTGNRKLAAATLLLDALKASAAAWIVGYFLGEEAAIIAGFFAFIGHLFPVWIGFKGGKGVATYIGTLLGVAPIMVVLFAAVWLAVAFTTRYSSLSALVAMLVIPVALLILGNEKVAAVMAIMTVISYWKHKANISRLMGGTETKIGAKG.

Transmembrane regions (helical) follow at residues 14-34 (IALA…GLIL), 67-87 (ATLL…GYFL), 91-111 (AAII…WIGF), 124-144 (LLGV…AVAF), and 148-168 (YSSL…LILG).

Belongs to the PlsY family. As to quaternary structure, probably interacts with PlsX.

It is found in the cell inner membrane. It carries out the reaction an acyl phosphate + sn-glycerol 3-phosphate = a 1-acyl-sn-glycero-3-phosphate + phosphate. It functions in the pathway lipid metabolism; phospholipid metabolism. Functionally, catalyzes the transfer of an acyl group from acyl-phosphate (acyl-PO(4)) to glycerol-3-phosphate (G3P) to form lysophosphatidic acid (LPA). This enzyme utilizes acyl-phosphate as fatty acyl donor, but not acyl-CoA or acyl-ACP. The polypeptide is Glycerol-3-phosphate acyltransferase (Rhizobium etli (strain CIAT 652)).